Here is a 538-residue protein sequence, read N- to C-terminus: Methionine--tRNA ligase (538 aa).

Residues 21–31 (YYVNDAPHLGH) carry the 'HIGH' region motif. 4 residues coordinate Zn(2+): cysteine 137, cysteine 140, cysteine 162, and histidine 165. The 'KMSKS' region signature appears at 313–317 (KMSKS). Lysine 316 provides a ligand contact to ATP.

This sequence belongs to the class-I aminoacyl-tRNA synthetase family. MetG type 2A subfamily. Monomer. It depends on Zn(2+) as a cofactor.

It is found in the cytoplasm. It carries out the reaction tRNA(Met) + L-methionine + ATP = L-methionyl-tRNA(Met) + AMP + diphosphate. Is required not only for elongation of protein synthesis but also for the initiation of all mRNA translation through initiator tRNA(fMet) aminoacylation. This is Methionine--tRNA ligase from Streptomyces coelicolor (strain ATCC BAA-471 / A3(2) / M145).